We begin with the raw amino-acid sequence, 245 residues long: tRNA1(Val) (adenine(37)-N6)-methyltransferase (245 aa).

The protein belongs to the methyltransferase superfamily. tRNA (adenine-N(6)-)-methyltransferase family.

It is found in the cytoplasm. It catalyses the reaction adenosine(37) in tRNA1(Val) + S-adenosyl-L-methionine = N(6)-methyladenosine(37) in tRNA1(Val) + S-adenosyl-L-homocysteine + H(+). Specifically methylates the adenine in position 37 of tRNA(1)(Val) (anticodon cmo5UAC). The sequence is that of tRNA1(Val) (adenine(37)-N6)-methyltransferase from Klebsiella pneumoniae subsp. pneumoniae (strain ATCC 700721 / MGH 78578).